Here is a 161-residue protein sequence, read N- to C-terminus: Allophycocyanin beta chain (161 aa).

Asn71 carries the N4-methylasparagine modification. Residue Cys81 participates in (2R,3E)-phycocyanobilin binding.

This sequence belongs to the phycobiliprotein family. As to quaternary structure, heterodimer of an alpha and a beta chain. In terms of processing, contains one covalently linked phycocyanobilin chromophore.

The protein localises to the cellular thylakoid membrane. Functionally, light-harvesting photosynthetic bile pigment-protein from the phycobiliprotein complex. Allophycocyanin has a maximum absorption at approximately 650 nanometers. The protein is Allophycocyanin beta chain (apcB) of Anabaena cylindrica.